Reading from the N-terminus, the 91-residue chain is Small ribosomal subunit protein uS19 (91 aa).

This sequence belongs to the universal ribosomal protein uS19 family.

Protein S19 forms a complex with S13 that binds strongly to the 16S ribosomal RNA. The sequence is that of Small ribosomal subunit protein uS19 from Dechloromonas aromatica (strain RCB).